We begin with the raw amino-acid sequence, 338 residues long: Lipoate-protein ligase A (338 aa).

Positions 29 to 216 constitute a BPL/LPL catalytic domain; that stretch reads PATQRVLFLW…AFFAHYGERV (188 aa). Residues R71, 76 to 79, and K134 contribute to the ATP site; that span reads GAVF. K134 lines the (R)-lipoate pocket.

Belongs to the LplA family. Monomer.

The protein resides in the cytoplasm. It carries out the reaction L-lysyl-[lipoyl-carrier protein] + (R)-lipoate + ATP = N(6)-[(R)-lipoyl]-L-lysyl-[lipoyl-carrier protein] + AMP + diphosphate + H(+). It functions in the pathway protein modification; protein lipoylation via exogenous pathway; protein N(6)-(lipoyl)lysine from lipoate: step 1/2. The protein operates within protein modification; protein lipoylation via exogenous pathway; protein N(6)-(lipoyl)lysine from lipoate: step 2/2. In terms of biological role, catalyzes both the ATP-dependent activation of exogenously supplied lipoate to lipoyl-AMP and the transfer of the activated lipoyl onto the lipoyl domains of lipoate-dependent enzymes. The protein is Lipoate-protein ligase A of Salmonella choleraesuis (strain SC-B67).